The chain runs to 286 residues: ATP synthase gamma chain (286 aa).

It belongs to the ATPase gamma chain family. As to quaternary structure, F-type ATPases have 2 components, CF(1) - the catalytic core - and CF(0) - the membrane proton channel. CF(1) has five subunits: alpha(3), beta(3), gamma(1), delta(1), epsilon(1). CF(0) has three main subunits: a, b and c.

Its subcellular location is the cell inner membrane. Its function is as follows. Produces ATP from ADP in the presence of a proton gradient across the membrane. The gamma chain is believed to be important in regulating ATPase activity and the flow of protons through the CF(0) complex. The protein is ATP synthase gamma chain of Shewanella oneidensis (strain ATCC 700550 / JCM 31522 / CIP 106686 / LMG 19005 / NCIMB 14063 / MR-1).